The chain runs to 103 residues: Histone H4 (103 aa).

A compositionally biased stretch (gly residues) spans 1–14 (MSGRGKGGKGLGKG). The segment at 1–20 (MSGRGKGGKGLGKGGAKRHR) is disordered. A DNA-binding region spans residues 17–21 (KRHRK).

It belongs to the histone H4 family. The nucleosome is a histone octamer containing two molecules each of H2A, H2B, H3 and H4 assembled in one H3-H4 heterotetramer and two H2A-H2B heterodimers. The octamer wraps approximately 147 bp of DNA.

The protein localises to the nucleus. Its subcellular location is the chromosome. In terms of biological role, core component of nucleosome. Nucleosomes wrap and compact DNA into chromatin, limiting DNA accessibility to the cellular machineries which require DNA as a template. Histones thereby play a central role in transcription regulation, DNA repair, DNA replication and chromosomal stability. DNA accessibility is regulated via a complex set of post-translational modifications of histones, also called histone code, and nucleosome remodeling. The polypeptide is Histone H4 (H4-I) (Chlamydomonas reinhardtii (Chlamydomonas smithii)).